Here is a 245-residue protein sequence, read N- to C-terminus: 1-(5-phosphoribosyl)-5-[(5-phosphoribosylamino)methylideneamino] imidazole-4-carboxamide isomerase (245 aa).

Asp8 serves as the catalytic Proton acceptor. Asp131 functions as the Proton donor in the catalytic mechanism.

Belongs to the HisA/HisF family.

It is found in the cytoplasm. It carries out the reaction 1-(5-phospho-beta-D-ribosyl)-5-[(5-phospho-beta-D-ribosylamino)methylideneamino]imidazole-4-carboxamide = 5-[(5-phospho-1-deoxy-D-ribulos-1-ylimino)methylamino]-1-(5-phospho-beta-D-ribosyl)imidazole-4-carboxamide. The protein operates within amino-acid biosynthesis; L-histidine biosynthesis; L-histidine from 5-phospho-alpha-D-ribose 1-diphosphate: step 4/9. In Neisseria gonorrhoeae (strain ATCC 700825 / FA 1090), this protein is 1-(5-phosphoribosyl)-5-[(5-phosphoribosylamino)methylideneamino] imidazole-4-carboxamide isomerase.